The chain runs to 384 residues: Intraflagellar transport protein 46 homolog (384 aa).

Disordered regions lie at residues 52 to 151 (VNAE…PADY) and 358 to 384 (SATD…LTLD). The segment covering 87-99 (EKLEEDTKRKKEP) has biased composition (basic and acidic residues). The segment covering 110-138 (DEEEDEDDDDDDDDDDSDDTESDEEEEEP) has biased composition (acidic residues). Residues 358 to 374 (SATDGQKSDTPPASRSA) are compositionally biased toward polar residues.

It belongs to the IFT46 family.

Its subcellular location is the cytoplasm. It localises to the cytoskeleton. It is found in the cilium basal body. The protein resides in the cell projection. The protein localises to the cilium. In terms of biological role, forms part of a complex involved in intraflagellar transport (IFT), the bi-directional movement of particles required for the assembly, maintenance and functioning of primary cilia. Plays a role in early embryonic development. The protein is Intraflagellar transport protein 46 homolog of Danio rerio (Zebrafish).